The sequence spans 454 residues: DNA-binding protein BIN4 (454 aa).

Disordered regions lie at residues 24 to 53, 103 to 249, and 380 to 454; these read LLSL…DDGD, AGKE…DKDT, and TFES…KAKK. The span at 112–123 shows a compositional bias: basic and acidic residues; it reads DCEKLSSKHKDA. Residues 132–150 show a composition bias toward polar residues; the sequence is LVSSDSEPSSPIKQEVTVS. Positions 229 to 249 are enriched in basic and acidic residues; it reads TPKEENCAQEILKTEDKDKDT. The segment covering 438 to 454 has biased composition (basic residues); the sequence is PAKKARNSAPKKPKAKK.

As to quaternary structure, interacts with TOP6A, RHL1 and itself, but not with TOP6B. As to expression, expressed in expanding cotyledons, vascular cells, elongating root cells, developing leaf trichomes, root and apical meristems and lateral root primordia.

It localises to the nucleus. Component of the DNA topoisomerase VI complex. Binds to DNA. Required for chromatin organization and progression of endoreduplication cycles. The loss of BIN4 activates the ATM- and ATR-dependent DNA damage responses in postmitotic cells and induces the ectopic expression of the mitotic G2/M-specific cyclin B1;1 gene in non-dividing cells. In Arabidopsis thaliana (Mouse-ear cress), this protein is DNA-binding protein BIN4 (BIN4).